The following is a 350-amino-acid chain: Glycolate oxidase subunit GlcE (350 aa).

Residues 1–173 form the FAD-binding PCMH-type domain; that stretch reads MLRECDYSQA…TEISMKVLPR (173 aa).

The glycolate oxidase likely consists of three subunits, GlcD, GlcE and GlcF. It depends on FAD as a cofactor.

It is found in the cell inner membrane. The catalysed reaction is glycolate + A = glyoxylate + AH2. It carries out the reaction (R)-lactate + A = pyruvate + AH2. In vitro the glycolate oxidase activity is inhibited by the sulfhydryl inhibitors CuSO4 and PCMB, by KCN, but not by the metal complexing agent EDTA. In terms of biological role, component of a complex that catalyzes the oxidation of glycolate to glyoxylate. Is required for E.coli to grow on glycolate as a sole source of carbon. Is also able to oxidize D-lactate ((R)-lactate) with a similar rate. Does not link directly to O(2), and 2,6-dichloroindophenol (DCIP) and phenazine methosulfate (PMS) can act as artificial electron acceptors in vitro, but the physiological molecule that functions as a primary electron acceptor during glycolate oxidation is unknown. This chain is Glycolate oxidase subunit GlcE, found in Escherichia coli (strain K12).